Reading from the N-terminus, the 306-residue chain is tRNA dimethylallyltransferase 2 (306 aa).

Position 19–26 (19–26 (GATASGKT)) interacts with ATP. Residue 21–26 (TASGKT) participates in substrate binding. Residues 44-47 (DSRQ) form an interaction with substrate tRNA region.

Belongs to the IPP transferase family. As to quaternary structure, monomer. Mg(2+) serves as cofactor.

It carries out the reaction adenosine(37) in tRNA + dimethylallyl diphosphate = N(6)-dimethylallyladenosine(37) in tRNA + diphosphate. Catalyzes the transfer of a dimethylallyl group onto the adenine at position 37 in tRNAs that read codons beginning with uridine, leading to the formation of N6-(dimethylallyl)adenosine (i(6)A). This is tRNA dimethylallyltransferase 2 from Citrifermentans bemidjiense (strain ATCC BAA-1014 / DSM 16622 / JCM 12645 / Bem) (Geobacter bemidjiensis).